Consider the following 43-residue polypeptide: Protein PsbN (43 aa).

Residues 5–27 (TLVAISISGLLVSFTGYALYTAF) form a helical membrane-spanning segment.

This sequence belongs to the PsbN family.

It localises to the plastid. The protein resides in the chloroplast thylakoid membrane. May play a role in photosystem I and II biogenesis. The protein is Protein PsbN of Eucalyptus globulus subsp. globulus (Tasmanian blue gum).